A 290-amino-acid chain; its full sequence is MASLNVSLCFFFATCAICEVARRASKALLPAGTYASFARGAVGAAQLAACCLEMRVLVELGPWAGGFGPDLLLTLVFLLFLVHGVTFDGASANPTVALQEFLMVEASLPNTLLKLSAQVLGAQAACALTQRCWAWELSELHLLQSLMAAHCSSTLRTSVLQGMLVEGACTFFFHLSLLHLQHSLLVYRVPALALLVTLMAYTAGPYTSAFFNPALAASVTFHCPGNTLLEYAHVYCLGPVAGMILAVLLHQGHLPRLFQRNLFYRQKSKYRTPRGKLSPGSVDAKMHKGE.

The next 2 helical transmembrane spans lie at 1 to 21 and 67 to 87; these read MASL…CEVA and FGPD…GVTF. The NPA 1 signature appears at 93-95; the sequence is NPT. Transmembrane regions (helical) follow at residues 112–138, 158–178, and 191–211; these read LLKL…WELS, SVLQ…LSLL, and ALAL…SAFF. Positions 212 to 214 match the NPA 2 motif; that stretch reads NPA. Residues 228 to 248 form a helical membrane-spanning segment; that stretch reads LLEYAHVYCLGPVAGMILAVL. The tract at residues 271 to 290 is disordered; sequence RTPRGKLSPGSVDAKMHKGE.

Belongs to the MIP/aquaporin (TC 1.A.8) family. AQP11/AQP12 subfamily. As to expression, restricted to pancreatic acinar cells.

It is found in the membrane. Its function is as follows. Aquaporins facilitate the transport of water and small neutral solutes across cell membranes. The sequence is that of Aquaporin-12 (Aqp12) from Mus musculus (Mouse).